We begin with the raw amino-acid sequence, 332 residues long: uncharacterized protein (332 aa).

Residues 185–205 (MVYGYSVFNAFFILLALPNVI) traverse the membrane as a helical segment.

The protein resides in the host membrane. This is an uncharacterized protein from Sulfolobus islandicus filamentous virus (isolate Iceland/Hveragerdi) (SIFV).